Here is a 168-residue protein sequence, read N- to C-terminus: Lipoprotein signal peptidase (168 aa).

A run of 3 helical transmembrane segments spans residues 8 to 28, 70 to 90, and 104 to 124; these read TLLV…VVLL, KYFL…YLFF, and VLLC…GHIV. Active-site residues include Asp-125 and Asp-143. A helical transmembrane segment spans residues 134 to 154; sequence WAFPTFNVADVLISLGTLLLV.

This sequence belongs to the peptidase A8 family.

It localises to the cell inner membrane. It catalyses the reaction Release of signal peptides from bacterial membrane prolipoproteins. Hydrolyzes -Xaa-Yaa-Zaa-|-(S,diacylglyceryl)Cys-, in which Xaa is hydrophobic (preferably Leu), and Yaa (Ala or Ser) and Zaa (Gly or Ala) have small, neutral side chains.. It participates in protein modification; lipoprotein biosynthesis (signal peptide cleavage). In terms of biological role, this protein specifically catalyzes the removal of signal peptides from prolipoproteins. In Chlamydia pneumoniae (Chlamydophila pneumoniae), this protein is Lipoprotein signal peptidase.